The primary structure comprises 220 residues: Phosphoenolpyruvate guanylyltransferase (220 aa).

Residues T154, G169, and S172 each coordinate phosphoenolpyruvate.

Belongs to the CofC family.

The catalysed reaction is phosphoenolpyruvate + GTP + H(+) = enolpyruvoyl-2-diphospho-5'-guanosine + diphosphate. Its pathway is cofactor biosynthesis; coenzyme F420 biosynthesis. Its function is as follows. Guanylyltransferase that catalyzes the activation of phosphoenolpyruvate (PEP) as enolpyruvoyl-2-diphospho-5'-guanosine, via the condensation of PEP with GTP. It is involved in the biosynthesis of coenzyme F420, a hydride carrier cofactor. This Mycolicibacterium paratuberculosis (strain ATCC BAA-968 / K-10) (Mycobacterium paratuberculosis) protein is Phosphoenolpyruvate guanylyltransferase.